The primary structure comprises 288 residues: 33 kDa chaperonin (288 aa).

Intrachain disulfides connect Cys233-Cys235 and Cys267-Cys270.

This sequence belongs to the HSP33 family. Under oxidizing conditions two disulfide bonds are formed involving the reactive cysteines. Under reducing conditions zinc is bound to the reactive cysteines and the protein is inactive.

It is found in the cytoplasm. In terms of biological role, redox regulated molecular chaperone. Protects both thermally unfolding and oxidatively damaged proteins from irreversible aggregation. Plays an important role in the bacterial defense system toward oxidative stress. In Pasteurella multocida (strain Pm70), this protein is 33 kDa chaperonin.